Reading from the N-terminus, the 1070-residue chain is MFTVSQTSRAWFIDRARQAREERLVQKERERSAVTIQALVRSFLCRRRLHRDIRKEIDEFFSADESGSSKRSALCIFKIARRLLFICKTTEDSERLEKLCRSILNSMDAENEPKVWYVSLALSKDLTLLWIKQIKSILWHCCELLGQLKPEILQDSRLITLYLTMLVTFTDTSTWKILRGKGESLRPALNHICANIMGHLNQRGLYSVLQVLLTRGLARPRPCLSKGMLTAAFSLALRPVVAAQFSDNLMRPFIIHVMSVPALVAHLSTVAPERLGVLESHDMLRKFIVFLRDRDRCRDACESLEGCHTLCLMGNLLHLGSLSLRLLEEEMDGFVSALTQMLCYCQKYVAQKKSNLTHWHPVLGWFSQPVDYGLNDSMYLITKQLQFLWAVPLIRILFSDILSRKLLEHAEPAPVQPQPSSPQTVLPVKSLLKRAFQKSASVRNILRPVGGRRVDSAEVRKVCNICVLYQTSLTTLTQIRLQILTGLTYLDDLLPKLWAFICELGPHGGLKLFLECLNNDTGESKQLLAMLMLFCDCSRHLITILDDIEVYEEQISFKLEELVTISSFLNSFVFKMIWDGIVENAKGETLELFQSVHGWLMVLYERDCRRRFAPEDHWLRRDLKPGVLFQELDKDRRRAQLVLQHIPHVVPHKNRVLLFRNMVIKEKEKLGLVETSSASPHVTHITIRRSRMLEDGYEQLRQLSQHAMKGVIRVKFVNDLGVDEAGIDQDGVFKEFLEEIIKRVFDPALNLFKTTSGDERLYPSPTSYIHENYLQLFEFVGKMLGKAVYEGIVVDVPFASFFLSQMLGHHHSVFYSSVDELPSLDSEFYKNLTSIKRYDGDIADLGLTLSYDEDVMGQLVCHELVPGGKTIPVTDENKISYIHLMAHFRMHTQIKNQTAALISGFRSIIKPEWIRMFSTPELQRLISGDNAEIDLEDLKKHTVYYGGFHGSHRVIIWLWDILASDFTPEERAMFLKFVTSCSRPPLLGFAYLKPPFSIRCVEVSDDQDTGDTLGSVLRGFFTIRKREPGGRLPTSSTCFNLLKLPNYSKKSVLREKLRYAISMNTGFELS.

Methionine 1 is modified (N-acetylmethionine). The IQ domain maps to 29–58 (RERSAVTIQALVRSFLCRRRLHRDIRKEID). A Phosphoserine modification is found at serine 421. The HECT domain occupies 704–1070 (SQHAMKGVIR…ISMNTGFELS (367 aa)). Cysteine 1038 serves as the catalytic Glycyl thioester intermediate.

In terms of tissue distribution, widely expressed. High expression is observed in developing central nervous system.

The protein resides in the postsynaptic density. The catalysed reaction is S-ubiquitinyl-[E2 ubiquitin-conjugating enzyme]-L-cysteine + [acceptor protein]-L-lysine = [E2 ubiquitin-conjugating enzyme]-L-cysteine + N(6)-ubiquitinyl-[acceptor protein]-L-lysine.. It functions in the pathway protein modification; protein ubiquitination. In terms of biological role, E3 ubiquitin-protein ligase which accepts ubiquitin from an E2 ubiquitin-conjugating enzyme in the form of a thioester and then directly transfers the ubiquitin to targeted substrates. Ubiquitinates BCKDK and targets it for degradation, thereby regulating various metabolic processes. Involved in the positive regulation of neurite branching in hippocampal neurons and the control of neuronal spine number and morphology, through the ubiquitination of PPP3CC. The polypeptide is Ubiquitin-protein ligase E3B (Ube3b) (Mus musculus (Mouse)).